The following is a 339-amino-acid chain: Hairy/enhancer-of-split related with YRPW motif protein 2 (339 aa).

Residues 1–52 are disordered; the sequence is MKRPCEETTSESDLDETIDVGSENNYPGHATSSVMRSNSPTTTSQIMARKKR. The segment covering 8 to 18 has biased composition (acidic residues); sequence TTSESDLDETI. The segment covering 22 to 46 has biased composition (polar residues); it reads SENNYPGHATSSVMRSNSPTTTSQI. A transcriptional repression and interaction with NCOR1 and SIN3A region spans residues 47–116; it reads MARKKRRGII…GGKGYFDAHA (70 aa). The region spanning 48–103 is the bHLH domain; it reads ARKKRRGIIEKRRRDRINNSLSELRRLVPTAFEKQGSAKLEKAEILQMTVDHLKML. Residues 122-157 form the Orange domain; sequence MSIGFRECLTEVARYLSSVEGLDPSDPLRVRLVSHL. The disordered stretch occupies residues 310-339; that stretch reads SVSAASSPQQTSTGTNNKPYQPWGTEVGAF. Residues 318-328 show a composition bias toward polar residues; that stretch reads QQTSTGTNNKP. The short motif at 329–332 is the YQPW motif element; it reads YQPW.

It belongs to the HEY family. In terms of assembly, may self-associate. Interacts with ARNT. Interacts with GATA4, GATA6, HES1 and HEYL. Interacts with HDAC1, NCOR1 and SIN3A. Highly expressed in the aorta, lower expression detected in the heart, brain, kidney, lung, muscle, ovary and testis.

The protein localises to the nucleus. Functionally, transcriptional repressor which functions as a downstream effector of Notch signaling in cardiovascular development. Specifically required for the Notch-induced endocardial epithelial to mesenchymal transition, which is itself criticial for cardiac valve and septum development. May be required in conjunction with HEY1 to specify arterial cell fate or identity. Promotes maintenance of neuronal precursor cells and glial versus neuronal fate specification. Binds preferentially to the canonical E box sequence 5'-CACGTG-3'. Represses transcription by the cardiac transcriptional activators GATA4 and GATA6 and by the neuronal bHLH factors ASCL1/MASH1 and NEUROD4/MATH3. This Mus musculus (Mouse) protein is Hairy/enhancer-of-split related with YRPW motif protein 2 (Hey2).